We begin with the raw amino-acid sequence, 274 residues long: Dermonecrotic toxin SdSicTox-betaIIB1bix (274 aa).

His5 is a catalytic residue. Glu25 and Asp27 together coordinate Mg(2+). Residue His41 is the Nucleophile of the active site. Cystine bridges form between Cys45/Cys51 and Cys47/Cys190. Residue Asp85 coordinates Mg(2+).

It belongs to the arthropod phospholipase D family. Class II subfamily. Requires Mg(2+) as cofactor. In terms of tissue distribution, expressed by the venom gland.

It is found in the secreted. The enzyme catalyses an N-(acyl)-sphingosylphosphocholine = an N-(acyl)-sphingosyl-1,3-cyclic phosphate + choline. It catalyses the reaction an N-(acyl)-sphingosylphosphoethanolamine = an N-(acyl)-sphingosyl-1,3-cyclic phosphate + ethanolamine. It carries out the reaction a 1-acyl-sn-glycero-3-phosphocholine = a 1-acyl-sn-glycero-2,3-cyclic phosphate + choline. The catalysed reaction is a 1-acyl-sn-glycero-3-phosphoethanolamine = a 1-acyl-sn-glycero-2,3-cyclic phosphate + ethanolamine. Dermonecrotic toxins cleave the phosphodiester linkage between the phosphate and headgroup of certain phospholipids (sphingolipid and lysolipid substrates), forming an alcohol (often choline) and a cyclic phosphate. This toxin acts on sphingomyelin (SM). It may also act on ceramide phosphoethanolamine (CPE), lysophosphatidylcholine (LPC) and lysophosphatidylethanolamine (LPE), but not on lysophosphatidylserine (LPS), and lysophosphatidylglycerol (LPG). It acts by transphosphatidylation, releasing exclusively cyclic phosphate products as second products. Induces dermonecrosis, hemolysis, increased vascular permeability, edema, inflammatory response, and platelet aggregation. This Sicarius cf. damarensis (strain GJB-2008) (Six-eyed sand spider) protein is Dermonecrotic toxin SdSicTox-betaIIB1bix.